A 100-amino-acid chain; its full sequence is Urease subunit gamma (100 aa).

Belongs to the urease gamma subunit family. Heterotrimer of UreA (gamma), UreB (beta) and UreC (alpha) subunits. Three heterotrimers associate to form the active enzyme.

It localises to the cytoplasm. The enzyme catalyses urea + 2 H2O + H(+) = hydrogencarbonate + 2 NH4(+). The protein operates within nitrogen metabolism; urea degradation; CO(2) and NH(3) from urea (urease route): step 1/1. This chain is Urease subunit gamma, found in Pseudomonas aeruginosa (strain LESB58).